The following is a 98-amino-acid chain: NADH-ubiquinone oxidoreductase chain 4L (98 aa).

The next 3 membrane-spanning stretches (helical) occupy residues 2–22, 29–49, and 61–81; these read PSIS…MLIF, SLLC…LTIL, and ILLL…LVTV.

The protein belongs to the complex I subunit 4L family. As to quaternary structure, core subunit of respiratory chain NADH dehydrogenase (Complex I) which is composed of 45 different subunits.

Its subcellular location is the mitochondrion inner membrane. It catalyses the reaction a ubiquinone + NADH + 5 H(+)(in) = a ubiquinol + NAD(+) + 4 H(+)(out). Its function is as follows. Core subunit of the mitochondrial membrane respiratory chain NADH dehydrogenase (Complex I) which catalyzes electron transfer from NADH through the respiratory chain, using ubiquinone as an electron acceptor. Part of the enzyme membrane arm which is embedded in the lipid bilayer and involved in proton translocation. The protein is NADH-ubiquinone oxidoreductase chain 4L (MT-ND4L) of Eulemur coronatus (Crowned lemur).